The following is a 51-amino-acid chain: Defensin (51 aa).

Intrachain disulfides connect C3/C31, C17/C36, and C21/C38. F51 bears the Phenylalanine amide mark.

The protein localises to the secreted. Functionally, antibacterial peptide against Gram-positive and Gram-negative bacteria and fungi. This Bombus pascuorum (Common carder bumblebee) protein is Defensin.